Here is an 874-residue protein sequence, read N- to C-terminus: Alanine--tRNA ligase (874 aa).

Positions 563, 567, 665, and 669 each coordinate Zn(2+).

It belongs to the class-II aminoacyl-tRNA synthetase family. It depends on Zn(2+) as a cofactor.

The protein localises to the cytoplasm. It catalyses the reaction tRNA(Ala) + L-alanine + ATP = L-alanyl-tRNA(Ala) + AMP + diphosphate. Its function is as follows. Catalyzes the attachment of alanine to tRNA(Ala) in a two-step reaction: alanine is first activated by ATP to form Ala-AMP and then transferred to the acceptor end of tRNA(Ala). Also edits incorrectly charged Ser-tRNA(Ala) and Gly-tRNA(Ala) via its editing domain. This chain is Alanine--tRNA ligase, found in Haemophilus influenzae (strain PittGG).